Consider the following 116-residue polypeptide: T cell receptor alpha variable 19 (116 aa).

The N-terminal stretch at 1–21 (MLTASLLRAVIASICVVSSMA) is a signal peptide. The region spanning 22 to 116 (QKVTQAQTEI…SAVYFCALSE (95 aa)) is the Ig-like domain. C43 and C112 form a disulfide bridge. N-linked (GlcNAc...) asparagine glycosylation occurs at N96.

Alpha-beta TR is a heterodimer composed of an alpha and beta chain; disulfide-linked. The alpha-beta TR is associated with the transmembrane signaling CD3 coreceptor proteins to form the TR-CD3 (TcR or TCR). The assembly of alpha-beta TR heterodimers with CD3 occurs in the endoplasmic reticulum where a single alpha-beta TR heterodimer associates with one CD3D-CD3E heterodimer, one CD3G-CD3E heterodimer and one CD247 homodimer forming a stable octameric structure. CD3D-CD3E and CD3G-CD3E heterodimers preferentially associate with TR alpha and TR beta chains, respectively. The association of the CD247 homodimer is the last step of TcR assembly in the endoplasmic reticulum and is required for transport to the cell surface.

Its subcellular location is the cell membrane. V region of the variable domain of T cell receptor (TR) alpha chain that participates in the antigen recognition. Alpha-beta T cell receptors are antigen specific receptors which are essential to the immune response and are present on the cell surface of T lymphocytes. Recognize peptide-major histocompatibility (MH) (pMH) complexes that are displayed by antigen presenting cells (APC), a prerequisite for efficient T cell adaptive immunity against pathogens. Binding of alpha-beta TR to pMH complex initiates TR-CD3 clustering on the cell surface and intracellular activation of LCK that phosphorylates the ITAM motifs of CD3G, CD3D, CD3E and CD247 enabling the recruitment of ZAP70. In turn ZAP70 phosphorylates LAT, which recruits numerous signaling molecules to form the LAT signalosome. The LAT signalosome propagates signal branching to three major signaling pathways, the calcium, the mitogen-activated protein kinase (MAPK) kinase and the nuclear factor NF-kappa-B (NF-kB) pathways, leading to the mobilization of transcription factors that are critical for gene expression and essential for T cell growth and differentiation. The T cell repertoire is generated in the thymus, by V-(D)-J rearrangement. This repertoire is then shaped by intrathymic selection events to generate a peripheral T cell pool of self-MH restricted, non-autoaggressive T cells. Post-thymic interaction of alpha-beta TR with the pMH complexes shapes TR structural and functional avidity. The sequence is that of T cell receptor alpha variable 19 from Homo sapiens (Human).